The sequence spans 64 residues: Large ribosomal subunit protein uL29 (64 aa).

The protein belongs to the universal ribosomal protein uL29 family.

The chain is Large ribosomal subunit protein uL29 from Coprothermobacter proteolyticus (strain ATCC 35245 / DSM 5265 / OCM 4 / BT).